We begin with the raw amino-acid sequence, 460 residues long: Probable amino acid transporter skat-1 (460 aa).

10 helical membrane passes run 64–84 (LGGL…NWYG), 132–152 (FVNV…ILFI), 172–192 (MILM…FTEM), 194–214 (IVSF…AVIM), 236–256 (TITM…ILPI), 270–290 (FGVL…LGFF), 316–336 (VNVF…YVVY), 362–382 (GFRV…PKLE), 383–403 (IMIP…FPPF), and 426–446 (IFIN…GVYT).

Belongs to the amino acid/polyamine transporter 2 family. As to expression, expressed in the head, tail, body and ventral nerve cord neurons, muscles of the vulva, and intestine.

The protein resides in the membrane. It is found in the cytoplasmic granule. In terms of biological role, plays a role in the accumulation of vital dyes and endogenous fluorescent compounds in lysosome related organelles. Has an effect on lysosome related organelle (LRO) function, in a pathway with serotonin. The chain is Probable amino acid transporter skat-1 from Caenorhabditis elegans.